A 346-amino-acid chain; its full sequence is Zinc transporter YKE4 (346 aa).

Over 1-2 (MK) the chain is Extracellular. Residues 3–23 (ASHICSYLLSIAPLVVSHGVH) traverse the membrane as a helical segment. Over 24-69 (HNRDHGHEANHESKQSFLILKQESIFYSLVCFLQNHLFVLGPRYNA) the chain is Cytoplasmic. A helical membrane pass occupies residues 70-90 (IVAILIIQLMPCLFVLFVPGL). Over 91–99 (RKNDRASLT) the chain is Extracellular. Residues 100–120 (LSLLVSFSLGTLLGDILLHVI) form a helical membrane-spanning segment. The Cytoplasmic portion of the chain corresponds to 121-126 (PESLSG). A helical membrane pass occupies residues 127–147 (VTDVTMVGGAIFLGFISFLTL). The Extracellular portion of the chain corresponds to 148-202 (DKTMRILSGTSNDDGSIHSHSHSHTPQQTAEKKAGFNMSAYLNVISGIAHHITDG). Asn-184 is a glycosylation site (N-linked (GlcNAc...) asparagine). A helical transmembrane segment spans residues 203–223 (IALATSFYSSTQVGIMTSIAV). At 224–252 (TFHEIPHELGDFAILLSSGFTFPQAIRAQ) the chain is on the cytoplasmic side. Residues 253 to 273 (AVTAFGAVVGTSIGCWMNEIG) traverse the membrane as a helical segment. N-linked (GlcNAc...) asparagine glycosylation is found at Asn-274 and Asn-285. Residues 274-290 (NNSHKATSSSANASELM) lie on the Extracellular side of the membrane. A helical membrane pass occupies residues 291 to 311 (LPFTAGGLIYIATTSVVPQIL). The Cytoplasmic segment spans residues 312 to 322 (HSSAPDSKLRE). Residues 323–343 (FKKWALQLVFIFVGFAVMALM) form a helical membrane-spanning segment. Residues 344–346 (DEH) are Extracellular-facing.

It belongs to the ZIP transporter (TC 2.A.5) family. KE4/Catsup subfamily.

It is found in the endoplasmic reticulum membrane. In terms of biological role, zinc transporter whose role depends on the zinc status of the cells. It helps to balance zinc levels between the cytosol and the secretory pathway. It transports zinc into the secretory pathway in a zinc-adequate environment and in a high zinc medium. In high zinc medium, transport of zinc into the secretory pathway is a way to eliminate zinc from the cytosol. Under low cytosolic zinc conditions, it removes zinc from the secretory pathway and acts as a zinc importer that helps to alleviate ER stress. The polypeptide is Zinc transporter YKE4 (YKE4) (Saccharomyces cerevisiae (strain ATCC 204508 / S288c) (Baker's yeast)).